The following is a 706-amino-acid chain: Translation factor GUF1 homolog, mitochondrial (706 aa).

A tr-type G domain is found at 89-272 (SRIRNFSIIA…SIVKNVPPPQ (184 aa)). GTP contacts are provided by residues 98-105 (AHIDHGKS), 165-169 (DTPGH), and 219-222 (NKID).

Belongs to the TRAFAC class translation factor GTPase superfamily. Classic translation factor GTPase family. LepA subfamily.

It localises to the mitochondrion inner membrane. It carries out the reaction GTP + H2O = GDP + phosphate + H(+). Functionally, promotes mitochondrial protein synthesis. May act as a fidelity factor of the translation reaction, by catalyzing a one-codon backward translocation of tRNAs on improperly translocated ribosomes. Binds to mitochondrial ribosomes in a GTP-dependent manner. This chain is Translation factor GUF1 homolog, mitochondrial, found in Thalassiosira pseudonana (Marine diatom).